Reading from the N-terminus, the 348-residue chain is Rhodopsin (348 aa).

M1 is modified (N-acetylmethionine). At 1 to 36 (MNGTEGPDFYIPMSNQTGVVRSPFEYPQYYLAEPWQ) the chain is on the extracellular side. N-linked (GlcNAc...) asparagine glycans are attached at residues N2 and N15. A helical membrane pass occupies residues 37 to 61 (FSMLAAYMFLLIVLGFPINFLTLYV). The Cytoplasmic segment spans residues 62–73 (TVQHKKLRTPLN). Residues 74–96 (YILLNLAVADLFMVLGGFTTTLY) form a helical membrane-spanning segment. Topologically, residues 97-110 (TSLHGYFVFGPTGC) are extracellular. An intrachain disulfide couples C110 to C187. A helical transmembrane segment spans residues 111–133 (NVEGFFATLGGEIALWSLVVLAI). A 'Ionic lock' involved in activated form stabilization motif is present at residues 134–136 (ERY). Topologically, residues 134-152 (ERYVVVCKPMSNFRFGENH) are cytoplasmic. A helical transmembrane segment spans residues 153–173 (AIMGVAFTWIMALACAAPPLV). Residues 174-202 (GWSRYIPEGMQCSCGIDYYTLKPEVNNES) are Extracellular-facing. Residue E201 participates in Zn(2+) binding. Residues 203–224 (FVIYMFVVHFTIPLIIIFFCYG) traverse the membrane as a helical segment. At 225–252 (QLVFTVKEAAAQQQESATTQKAEKEVTR) the chain is on the cytoplasmic side. A helical membrane pass occupies residues 253–274 (MVIIMVIAFLICWVPYASVAFY). The Extracellular portion of the chain corresponds to 275–286 (IFTHQGSNFGPI). Q279 lines the Zn(2+) pocket. The chain crosses the membrane as a helical span at residues 287 to 308 (FMTIPAFFAKSSSIYNPVIYIM). K296 bears the N6-(retinylidene)lysine mark. Residues 309 to 348 (MNKQFRNCMLTTICCGKNPLGDDEASATASKTETSQVAPA) lie on the Cytoplasmic side of the membrane. S-palmitoyl cysteine attachment occurs at residues C322 and C323. Residues 330–348 (DDEASATASKTETSQVAPA) form an interaction with SAG region. S334 is modified (phosphoserine). Phosphothreonine is present on T336. S338 carries the phosphoserine modification. T340 and T342 each carry phosphothreonine. Residue S343 is modified to Phosphoserine.

Belongs to the G-protein coupled receptor 1 family. Opsin subfamily. In terms of assembly, homodimer. May form a complex composed of RHO, GRK1 and RCVRN in a Ca(2+)-dependent manner; RCVRN prevents the interaction between GRK1 and RHO. Interacts with GRK1. Interacts (phosphorylated form) with SAG. Interacts with GNAT1. Interacts with GNAT3. SAG and G-proteins compete for a common binding site. Interacts with PRCD; the interaction promotes PRCD stability. Forms a complex with ASAP1 and ARF4. Forms a complex with ASAP1, RAB11A, Rabin8/RAB3IP, ARF4 and RAB11FIP3; the complex regulates Golgi-to-cilia rhodopsin/RHO transport in photoreceptors. In terms of processing, phosphorylated on some or all of the serine and threonine residues present in the C-terminal region. Contains one covalently linked retinal chromophore. Upon light absorption, the covalently bound 11-cis-retinal is converted to all-trans-retinal. After hydrolysis of the Schiff base and release of the covalently bound all-trans-retinal, active rhodopsin is regenerated by binding of a fresh molecule of 11-cis-retinal.

The protein resides in the membrane. Its subcellular location is the cell projection. It is found in the cilium. It localises to the photoreceptor outer segment. Its function is as follows. Photoreceptor required for image-forming vision at low light intensity. Required for photoreceptor cell viability after birth. Light-induced isomerization of 11-cis to all-trans retinal triggers a conformational change that activates signaling via G-proteins. Subsequent receptor phosphorylation mediates displacement of the bound G-protein alpha subunit by the arrestin SAG and terminates signaling. This is Rhodopsin (RHO) from Oryctolagus cuniculus (Rabbit).